Reading from the N-terminus, the 212-residue chain is MTSPSSRTPRGSTPPFEPSADELVLHASGRKTAEDRLPGDPSPAALIDRFLRVDQAGEHGAVRIYQGQLAVLGRRSANVGVLRHMLAQEEVHLATFDKLVADRRARPTLLGPLWHVAGFALGAGTALLGEKAAMACTTAIEEAIDGHYKDQYDRLGDDELPLKATIDTFRREELEHRDIGYANGARQAPAFPVLSGAIKAGAKLAIWVSERV.

Over residues 1–14 (MTSPSSRTPRGSTP) the composition is skewed to low complexity. The interval 1-22 (MTSPSSRTPRGSTPPFEPSADE) is disordered. Glu-58, Glu-89, His-92, Glu-141, Glu-173, and His-176 together coordinate Fe cation.

The protein belongs to the COQ7 family. Fe cation serves as cofactor.

It localises to the cell membrane. The catalysed reaction is a 5-methoxy-2-methyl-3-(all-trans-polyprenyl)benzene-1,4-diol + AH2 + O2 = a 3-demethylubiquinol + A + H2O. Its pathway is cofactor biosynthesis; ubiquinone biosynthesis. Functionally, catalyzes the hydroxylation of 2-nonaprenyl-3-methyl-6-methoxy-1,4-benzoquinol during ubiquinone biosynthesis. This chain is 3-demethoxyubiquinol 3-hydroxylase, found in Rhodospirillum rubrum (strain ATCC 11170 / ATH 1.1.1 / DSM 467 / LMG 4362 / NCIMB 8255 / S1).